A 39-amino-acid chain; its full sequence is SPbeta prophage-derived uncharacterized protein YorT (39 aa).

This is SPbeta prophage-derived uncharacterized protein YorT (yorT) from Bacillus subtilis (strain 168).